We begin with the raw amino-acid sequence, 517 residues long: Probable bifunctional methylthioribulose-1-phosphate dehydratase/enolase-phosphatase E1 1 (517 aa).

The methylthioribulose-1-phosphate dehydratase stretch occupies residues 1–240 (MAAAALNGLK…AIKLYQLGLD (240 aa)). Substrate is bound at residue Cys112. Zn(2+) contacts are provided by His130 and His132. Glu155 functions as the Proton donor/acceptor; for methylthioribulose-1-phosphate dehydratase activity in the catalytic mechanism. A Zn(2+)-binding site is contributed by His205. The enolase-phosphatase E1 stretch occupies residues 278–517 (IVLDIEGTTT…FKTITSFSDI (240 aa)). Mg(2+) is bound by residues Asp281 and Glu283. Residues 416–417 (SS) and Lys450 each bind substrate. Residue Asp476 participates in Mg(2+) binding.

This sequence in the N-terminal section; belongs to the aldolase class II family. MtnB subfamily. In the C-terminal section; belongs to the HAD-like hydrolase superfamily. MasA/MtnC family. Zn(2+) is required as a cofactor. Requires Mg(2+) as cofactor.

The enzyme catalyses 5-(methylsulfanyl)-D-ribulose 1-phosphate = 5-methylsulfanyl-2,3-dioxopentyl phosphate + H2O. It carries out the reaction 5-methylsulfanyl-2,3-dioxopentyl phosphate + H2O = 1,2-dihydroxy-5-(methylsulfanyl)pent-1-en-3-one + phosphate. It functions in the pathway amino-acid biosynthesis; L-methionine biosynthesis via salvage pathway; L-methionine from S-methyl-5-thio-alpha-D-ribose 1-phosphate: step 2/6. It participates in amino-acid biosynthesis; L-methionine biosynthesis via salvage pathway; L-methionine from S-methyl-5-thio-alpha-D-ribose 1-phosphate: step 3/6. The protein operates within amino-acid biosynthesis; L-methionine biosynthesis via salvage pathway; L-methionine from S-methyl-5-thio-alpha-D-ribose 1-phosphate: step 4/6. The sequence is that of Probable bifunctional methylthioribulose-1-phosphate dehydratase/enolase-phosphatase E1 1 from Vitis vinifera (Grape).